A 186-amino-acid chain; its full sequence is CASP-like protein 4C2 (186 aa).

At 1 to 31 (MRSPQPHRSGGDTQQHFQSTVSVQKLKRFNS) the chain is on the cytoplasmic side. The chain crosses the membrane as a helical span at residues 32–52 (LILVFRFAAFCFSLASAVFML). The Extracellular portion of the chain corresponds to 53 to 71 (TNSRGSDSLHWYNFDAFRY). Residues 72–92 (VFAANAIVAIYSLFEMAASVW) form a helical membrane-spanning segment. The Cytoplasmic portion of the chain corresponds to 93–103 (EISRNATLFPE). Residues 104–124 (ICQVWFDFGHDQVFAYLLLSA) form a helical membrane-spanning segment. Topologically, residues 125 to 150 (NTAGTELARTLKDTCTDNKAFCVQSD) are extracellular. Residues 151-171 (IAIVLGFAGFLFLGISSLFSG) form a helical membrane-spanning segment. Residues 172-186 (FRVVCFIINGSRFYV) are Cytoplasmic-facing.

Belongs to the Casparian strip membrane proteins (CASP) family. As to quaternary structure, homodimer and heterodimers.

The protein resides in the cell membrane. The protein is CASP-like protein 4C2 of Populus trichocarpa (Western balsam poplar).